A 659-amino-acid chain; its full sequence is UDP-glucuronate:xylan alpha-glucuronosyltransferase 1 (659 aa).

A compositionally biased stretch (low complexity) spans 1 to 14 (MANSPAAPAPTTTT). The interval 1–20 (MANSPAAPAPTTTTGGDSRR) is disordered. Residues 70 to 90 (FQIVKLLLFILLSATLFTIIY) form a helical; Signal-anchor for type II membrane protein membrane-spanning segment. Positions 416 and 418 each coordinate Mn(2+). Substrate is bound by residues 416–418 (DAD), 445–447 (NSG), 472–476 (NGGDQ), and 526–531 (HYLGMK). Mn(2+) is bound at residue H526.

This sequence belongs to the glycosyltransferase 8 family. Glycogenin subfamily. Mn(2+) serves as cofactor.

The protein resides in the golgi apparatus membrane. In terms of biological role, glycosyltransferase required for the addition of both glucuronic acid and 4-O-methylglucuronic acid branches to xylan in stem cell walls. In association with GUX2, is responsible for almost all of the substitutions of the xylan backbone in stem glucuronoxylan. This is UDP-glucuronate:xylan alpha-glucuronosyltransferase 1 (GUX1) from Arabidopsis thaliana (Mouse-ear cress).